The following is a 780-amino-acid chain: Striatin (780 aa).

A coiled-coil region spans residues 53-120 (LHFLQHEWAR…QERAKYHKLK (68 aa)). The tract at residues 55-63 (FLQHEWARF) is caveolin-binding. The tract at residues 124–145 (ELNQGDMKPPSYDSDEGNETEV) is disordered. A Phosphoserine modification is found at Ser-137. The tract at residues 149–166 (QNSQFMWKQGRQLLRQYL) is calmodulin-binding. Phosphothreonine is present on Thr-225. 4 positions are modified to phosphoserine: Ser-227, Ser-229, Ser-245, and Ser-259. 3 disordered regions span residues 290 to 321 (FLVA…TPER), 334 to 353 (EQYK…NRSK), and 363 to 388 (DVDE…LPEQ). A compositionally biased stretch (basic and acidic residues) spans 299 to 315 (NESRSAGDGTDWEKEDQ). The span at 338–351 (KERKGKKGVKRPNR) shows a compositional bias: basic residues. WD repeat units follow at residues 461 to 500 (SHFD…PAKK), 514 to 553 (AHKG…VDPY), 567 to 606 (GHTD…PALT), 662 to 701 (SSSC…LIHS), 704 to 743 (AHLE…CIQE), and 750 to 780 (KFEE…KVFV).

It belongs to the WD repeat striatin family. Part of the core of STRIPAK complexes composed of PP2A catalytic and scaffolding subunits, the striatins (PP2A regulatory subunits), the striatin-associated proteins MOB4, STRIP1 and STRIP2, PDCD10 and members of the STE20 kinases, such as STK24 and STK26. Interacts with CTTNBP2; this interaction may regulate dendritic spine distribution of STRN. Activation of glutamate receptors weakens the interaction with CTTNBP2. In terms of tissue distribution, mainly expressed in the central nervous system. Mostly confined in dendrites, not in axons, and is most abundant in dendritic spines.

Its subcellular location is the cytoplasm. The protein localises to the membrane. The protein resides in the cell projection. It localises to the dendritic spine. Calmodulin-binding scaffolding protein which is the center of the striatin-interacting phosphatase and kinase (STRIPAK) complexes. STRIPAK complexes have critical roles in protein (de)phosphorylation and are regulators of multiple signaling pathways including Hippo, MAPK, nuclear receptor and cytoskeleton remodeling. Different types of STRIPAK complexes are involved in a variety of biological processes such as cell growth, differentiation, apoptosis, metabolism and immune regulation. The sequence is that of Striatin (Strn) from Rattus norvegicus (Rat).